Reading from the N-terminus, the 114-residue chain is MGLSRWHDKNSRPAEEKSEEMQQDAHYYALAASDSLNASVSNEYGNQVMNSFWKVGIDSPYVDDEAIRNRDVENNLPSLKQSVYNANEPNATSSAFSTASYAHETFDFRNLKLR.

Over residues 1 to 20 the composition is skewed to basic and acidic residues; the sequence is MGLSRWHDKNSRPAEEKSEE. Residues 1–22 form a disordered region; the sequence is MGLSRWHDKNSRPAEEKSEEMQ.

Functionally, may be involved in phosphatase regulation and/or generation of precursor metabolites and energy. This is an uncharacterized protein from Saccharomyces cerevisiae (strain ATCC 204508 / S288c) (Baker's yeast).